We begin with the raw amino-acid sequence, 262 residues long: MQVDLLGSAQSAHALHLFHQHSPLVHCMTNDVVQTFTANTLLALGASPAMVIETEEASQFAAIASALLINVGTLTQPRAQAMRAAVEQAKSSQTPWTLDPVAVGALDYRRHFCHELLSFKPAAIRGNASEIMALAGIANGGRGVDTTDAAANAIPAAQTLARETGAIVVVTGEMDYVTDGHRIIGIHGGDPLMTKVVGTGCALSAVVAACCALPGDTLENVASACHWMKQAGERAVARSEGPGSFVPHFLDALWQLTQEVQA.

Position 50 (Met50) interacts with substrate. ATP is bound by residues Arg125 and Thr171. Position 198 (Gly198) interacts with substrate.

The protein belongs to the Thz kinase family. Mg(2+) is required as a cofactor.

It catalyses the reaction 5-(2-hydroxyethyl)-4-methylthiazole + ATP = 4-methyl-5-(2-phosphooxyethyl)-thiazole + ADP + H(+). The protein operates within cofactor biosynthesis; thiamine diphosphate biosynthesis; 4-methyl-5-(2-phosphoethyl)-thiazole from 5-(2-hydroxyethyl)-4-methylthiazole: step 1/1. Functionally, catalyzes the phosphorylation of the hydroxyl group of 4-methyl-5-beta-hydroxyethylthiazole (THZ). The chain is Hydroxyethylthiazole kinase from Escherichia coli (strain K12 / MC4100 / BW2952).